The primary structure comprises 391 residues: Casein kinase II subunit alpha (391 aa).

The tract at residues 36 to 41 is interaction with beta subunit; that stretch reads QDDYQL. Residues 39–324 form the Protein kinase domain; the sequence is YQLVRKLGRG…AREAMEHPYF (286 aa). ATP-binding positions include 45–53 and lysine 68; that span reads LGRGKYSEV. Aspartate 156 acts as the Proton acceptor in catalysis. The segment covering 335–346 has biased composition (polar residues); sequence GSSNMPGGSTPV. A disordered region spans residues 335 to 363; the sequence is GSSNMPGGSTPVSSASMMSGISSVPTPSP. Low complexity predominate over residues 347–357; that stretch reads SSASMMSGISS.

It belongs to the protein kinase superfamily. Ser/Thr protein kinase family. CK2 subfamily. Tetramer composed of an alpha chain, an alpha' and two beta chains. Interacts with RNPS1.

The protein resides in the nucleus. The enzyme catalyses L-seryl-[protein] + ATP = O-phospho-L-seryl-[protein] + ADP + H(+). It catalyses the reaction L-threonyl-[protein] + ATP = O-phospho-L-threonyl-[protein] + ADP + H(+). Its function is as follows. Catalytic subunit of a constitutively active serine/threonine-protein kinase complex that phosphorylates a large number of substrates containing acidic residues C-terminal to the phosphorylated serine or threonine. Regulates numerous cellular processes, such as cell cycle progression, apoptosis and transcription, as well as viral infection. May act as a regulatory node which integrates and coordinates numerous signals leading to an appropriate cellular response. During mitosis, functions as a component of the p53/TP53-dependent spindle assembly checkpoint (SAC) that maintains cyclin-B-CDK1 activity and G2 arrest in response to spindle damage. Can also negatively regulate apoptosis. Phosphorylates the caspases CASP9 and CASP2 and the apoptotic regulator NOL3. Phosphorylation protects CASP9 from cleavage and activation by CASP8, and inhibits the dimerization of CASP2 and activation of CASP8. Plays an important role in the circadian clock function by phosphorylating BMAL1. The sequence is that of Casein kinase II subunit alpha (CSNK2A1) from Gallus gallus (Chicken).